The chain runs to 381 residues: Cytochrome b (381 aa).

4 consecutive transmembrane segments (helical) span residues 34–54 (FGSL…FLAM), 78–99 (WLIR…YLHI), 114–134 (WNIG…GYVL), and 179–199 (FFAF…IHLL). The heme b site is built by His84 and His98. Heme b is bound by residues His183 and His197. His202 serves as a coordination point for a ubiquinone. The next 4 helical transmembrane spans lie at 227–247 (YKDL…ALFT), 289–309 (LGGV…PLLH), 321–341 (LTQI…WIGG), and 348–368 (FIMV…IIMP).

This sequence belongs to the cytochrome b family. As to quaternary structure, the cytochrome bc1 complex contains 3 respiratory subunits (MT-CYB, CYC1 and UQCRFS1), 2 core proteins (UQCRC1 and UQCRC2) and probably 6 low-molecular weight proteins. Heme b is required as a cofactor.

Its subcellular location is the mitochondrion inner membrane. In terms of biological role, component of the ubiquinol-cytochrome c reductase complex (complex III or cytochrome b-c1 complex) that is part of the mitochondrial respiratory chain. The b-c1 complex mediates electron transfer from ubiquinol to cytochrome c. Contributes to the generation of a proton gradient across the mitochondrial membrane that is then used for ATP synthesis. The chain is Cytochrome b (mt-cyb) from Negaprion brevirostris (Lemon shark).